The sequence spans 187 residues: UPF0167 protein MT2352 (187 aa).

This sequence belongs to the UPF0167 family.

The sequence is that of UPF0167 protein MT2352 from Mycobacterium tuberculosis (strain CDC 1551 / Oshkosh).